A 269-amino-acid polypeptide reads, in one-letter code: UPF0162 protein BU173 (269 aa).

The protein belongs to the UPF0162 family.

This chain is UPF0162 protein BU173, found in Buchnera aphidicola subsp. Acyrthosiphon pisum (strain APS) (Acyrthosiphon pisum symbiotic bacterium).